The primary structure comprises 512 residues: MIKDMIASIEQFAQTQADFPVYDCLGERRTYGQLKRDSDSIAAFIDSLALLAKSPVLVFGAQTYDMLATFVALTKSGHAYIPVDVHSAPERILAIIEIAKPSLIIAIEEFPLTIEGISLVSLSEIESAKLAEMPYERTHSVKGDDNYYIIFTSGTTGQPKGVQISHDNLLSFTNWMIEDAAFDVPKQPQMLAQPPYSFDLSVMYWAPTLALGGTLFALPKELVADFKQLFTTIAQLPVGIWTSTPSFADMAMLSDDFCQAKMPALTHFYFDGEELTVSTARKLFERFPSAKIINAYGPTEATVALSAIEITREMVDNYTRLPIGYPKPDSPTYIIDEDGKELASGEQGEIIVTGPAVSKGYLNNPEKTAEAFFTFKGQPAYHTGDIGSLTEDNILLYGGRLDFQIKYAGYRIELEDVSQQLNQSPMVASAVAVPRYNKEHKVQNLLAYIVVKDGVKERFDRELELTKAIKASVKDHMMSYMMPSKFLYRDSLPLTPNGKIDIKTLINEVNNR.

ATP is bound at residue 152-153 (TS). Asp-199 is a D-alanine binding site. 294–299 (NAYGPT) contacts ATP. Residue Val-303 coordinates D-alanine. ATP contacts are provided by residues Asp-385, 397 to 400 (YGGR), and Lys-499. Residue Lys-499 participates in D-alanine binding.

This sequence belongs to the ATP-dependent AMP-binding enzyme family. DltA subfamily.

The protein resides in the cytoplasm. The catalysed reaction is holo-[D-alanyl-carrier protein] + D-alanine + ATP = D-alanyl-[D-alanyl-carrier protein] + AMP + diphosphate. It functions in the pathway cell wall biogenesis; lipoteichoic acid biosynthesis. In terms of biological role, catalyzes the first step in the D-alanylation of lipoteichoic acid (LTA), the activation of D-alanine and its transfer onto the D-alanyl carrier protein (Dcp) DltC. In an ATP-dependent two-step reaction, forms a high energy D-alanyl-AMP intermediate, followed by transfer of the D-alanyl residue as a thiol ester to the phosphopantheinyl prosthetic group of the Dcp. D-alanylation of LTA plays an important role in modulating the properties of the cell wall in Gram-positive bacteria, influencing the net charge of the cell wall. The sequence is that of D-alanine--D-alanyl carrier protein ligase from Streptococcus pyogenes serotype M49 (strain NZ131).